Consider the following 231-residue polypeptide: Large ribosomal subunit protein uL1 (231 aa).

It belongs to the universal ribosomal protein uL1 family. As to quaternary structure, part of the 50S ribosomal subunit.

Binds directly to 23S rRNA. The L1 stalk is quite mobile in the ribosome, and is involved in E site tRNA release. In terms of biological role, protein L1 is also a translational repressor protein, it controls the translation of the L11 operon by binding to its mRNA. The protein is Large ribosomal subunit protein uL1 of Nitrosococcus oceani (strain ATCC 19707 / BCRC 17464 / JCM 30415 / NCIMB 11848 / C-107).